A 568-amino-acid chain; its full sequence is MKKISRKEYVSMYGPTTGDKVRLGDTDLILEVEHDCTTYGEEIKFGGGKTIRDGMGQTNSPSSHELDLVITNALIVDYTGIYKADIGIKNGKIHGIGKAGNKDLQDGVCNRLCVGPATEALAAEGLIVTAGGIDTHIHFISPQQIPTAFASGITTMIGGGTGPADGTNATTITPGRWNLKEMLRASEEYAMNLGYLGKGNVSFEPALIDQLEAGAIGFKIHEDWGSTPSAINHALNIADKYDVQVAIHTDTLNEAGCVEDTLEAIAGRTIHTFHTEGAGGGHAPDVIKMAGEFNILPASTNPTIPFTKNTEAEHMDMLMCHHLDKNIKEDVEFADSRIRPQTIAAEDKLHDMGIFSITSSDSQAMGRVGEVITRTWQTADKNKKEFGRLPEEKGDNDNFRIKRYISKYTINPAITHGISEYVGSVEVGKYADLVLWSPAFFGIKPNMIIKGGFIALSQMGDANASIPTPQPVYYREMFGHHGKAKFDTNITFVSQVAYENGIKHELGLQRVVLPVKNCRNITKKDLKFNDVTAHIEVNPETYKVKVDGNEVTSHAADKLSLAQLYNLF.

The 438-residue stretch at 131 to 568 (GGIDTHIHFI…LSLAQLYNLF (438 aa)) folds into the Urease domain. His-136, His-138, and Lys-219 together coordinate Ni(2+). Residue Lys-219 is modified to N6-carboxylysine. Residue His-221 coordinates substrate. Residues His-248 and His-274 each contribute to the Ni(2+) site. The active-site Proton donor is His-321. Asp-361 contacts Ni(2+).

The protein belongs to the metallo-dependent hydrolases superfamily. Urease alpha subunit family. In terms of assembly, heterohexamer of 3 UreA (alpha) and 3 UreB (beta) subunits. The cofactor is Ni cation. Carboxylation allows a single lysine to coordinate two nickel ions.

It localises to the cytoplasm. It carries out the reaction urea + 2 H2O + H(+) = hydrogencarbonate + 2 NH4(+). Its pathway is nitrogen metabolism; urea degradation; CO(2) and NH(3) from urea (urease route): step 1/1. The protein is Urease subunit beta of Helicobacter heilmannii.